The primary structure comprises 1241 residues: Dinoflagellate luciferase (1241 aa).

Luciferase stretches follow at residues 114–465 (KTGL…IKRD), 491–842 (DQGF…TKRD), and 868–1218 (EKGF…KKRD).

It belongs to the calycin superfamily. Luciferase family.

It is found in the cytoplasmic vesicle. The catalysed reaction is dinoflagellate luciferin + O2 = oxidized dinoflagellate luciferin + hnu + H2O + H(+). With respect to regulation, regulated by pH: upon acidification, at a pH of 6.3, dinoflagellate luciferin is released from luciferin-binding protein LBP, allowing the interaction between Dinoflagellate luciferase and its substrate luciferin. Functionally, emits blue light flashes with a wavelength of 475 nm during the night phase. This Lingulodinium polyedra (Dinoflagellate) protein is Dinoflagellate luciferase.